The chain runs to 202 residues: T-cell surface glycoprotein CD3 epsilon chain (202 aa).

The N-terminal stretch at 1-21 (MQSRNLWRILGLCLLSVGAWG) is a signal peptide. The Extracellular segment spans residues 22 to 122 (QDEDFKASDD…VCANCIEVNL (101 aa)). The Ig-like domain occupies 37–107 (PEKRFKVSIS…ADSIKEKSYL (71 aa)). Residues cysteine 54 and cysteine 96 are joined by a disulfide bond. Residues 123-143 (MAVVTIIVADICLTLGLLLMV) traverse the membrane as a helical segment. At 144-202 (YYWSKTRKANAKPVMRGTGAGSRPRGQNKEKPPPVPNPDYEPIRKGQQDLYSGLNQRGI) the chain is on the cytoplasmic side. Positions 156–202 (PVMRGTGAGSRPRGQNKEKPPPVPNPDYEPIRKGQQDLYSGLNQRGI) are disordered. Residues 170-187 (QNKEKPPPVPNPDYEPIR) form an NUMB-binding region region. An ITAM domain is found at 173–200 (EKPPPVPNPDYEPIRKGQQDLYSGLNQR). The interval 174–181 (KPPPVPNP) is proline-rich sequence. 2 positions are modified to phosphotyrosine: tyrosine 183 and tyrosine 194. Polar residues predominate over residues 192–202 (DLYSGLNQRGI).

In terms of assembly, the TCR-CD3 complex is composed of a CD3D/CD3E and a CD3G/CD3E heterodimers that preferentially associate with TCRalpha and TCRbeta, respectively, to form TCRalpha/CD3E/CD3G and TCRbeta/CD3G/CD3E trimers. In turn, the hexamer interacts with CD3Z homodimer to form the TCR-CD3 complex. Alternatively, TCRalpha and TCRbeta can be replaced by TCRgamma and TCRdelta. Interacts with CD6. Interacts (via Proline-rich sequence) with NCK1; the interaction is ligand dependent but independent of tyrosine kinase activation. Phosphorylated on Tyr residues after T-cell receptor triggering by LCK in association with CD4/CD8.

It localises to the cell membrane. Functionally, part of the TCR-CD3 complex present on T-lymphocyte cell surface that plays an essential role in adaptive immune response. When antigen presenting cells (APCs) activate T-cell receptor (TCR), TCR-mediated signals are transmitted across the cell membrane by the CD3 chains CD3D, CD3E, CD3G and CD3Z. All CD3 chains contain immunoreceptor tyrosine-based activation motifs (ITAMs) in their cytoplasmic domain. Upon TCR engagement, these motifs become phosphorylated by Src family protein tyrosine kinases LCK and FYN, resulting in the activation of downstream signaling pathways. In addition of this role of signal transduction in T-cell activation, CD3E plays an essential role in correct T-cell development. Also participates in internalization and cell surface down-regulation of TCR-CD3 complexes via endocytosis sequences present in CD3E cytosolic region. In addition to its role as a TCR coreceptor, it serves as a receptor for ITPRIPL1. Ligand recognition inhibits T-cell activation by promoting interaction with NCK1, which prevents CD3E-ZAP70 interaction and blocks the ERK-NFkB signaling cascade and calcium influx. This chain is T-cell surface glycoprotein CD3 epsilon chain (CD3E), found in Canis lupus familiaris (Dog).